A 188-amino-acid polypeptide reads, in one-letter code: MQTRLWVTGYRSFELGAFNDKDPKIEVIKRALKENLIDQLENNGLEWIITGGQMGTEQWTCETAIGLKKDFPQLKIALMLPFSNFAANWNQEHQVKLTDLRTRVDFSEALSKESYKSPIQLRNFQAFMLKHTDGALMVYDPDNPGKAEFEYKAIQAYQLEHPDYSLKTIDFDMLTDISNEIEEEKRPW.

This sequence belongs to the UPF0398 family.

This chain is UPF0398 protein OEOE_1093, found in Oenococcus oeni (strain ATCC BAA-331 / PSU-1).